A 409-amino-acid chain; its full sequence is Putative competence-damage inducible protein (409 aa).

Belongs to the CinA family.

The sequence is that of Putative competence-damage inducible protein from Clostridium botulinum (strain 657 / Type Ba4).